Here is a 349-residue protein sequence, read N- to C-terminus: Nicotinate-nucleotide--dimethylbenzimidazole phosphoribosyltransferase (349 aa).

Catalysis depends on glutamate 315, which acts as the Proton acceptor.

It belongs to the CobT family.

It carries out the reaction 5,6-dimethylbenzimidazole + nicotinate beta-D-ribonucleotide = alpha-ribazole 5'-phosphate + nicotinate + H(+). Its pathway is nucleoside biosynthesis; alpha-ribazole biosynthesis; alpha-ribazole from 5,6-dimethylbenzimidazole: step 1/2. In terms of biological role, catalyzes the synthesis of alpha-ribazole-5'-phosphate from nicotinate mononucleotide (NAMN) and 5,6-dimethylbenzimidazole (DMB). The protein is Nicotinate-nucleotide--dimethylbenzimidazole phosphoribosyltransferase of Variovorax paradoxus (strain S110).